The chain runs to 249 residues: Exosome complex component Rrp41 (249 aa).

It belongs to the RNase PH family. Rrp41 subfamily. As to quaternary structure, component of the archaeal exosome complex. Forms a hexameric ring-like arrangement composed of 3 Rrp41-Rrp42 heterodimers. The hexameric ring associates with a trimer of Rrp4 and/or Csl4 subunits.

The protein localises to the cytoplasm. Functionally, catalytic component of the exosome, which is a complex involved in RNA degradation. Has 3'-&gt;5' exoribonuclease activity. Can also synthesize heteromeric RNA-tails. In Thermococcus onnurineus (strain NA1), this protein is Exosome complex component Rrp41.